Here is a 102-residue protein sequence, read N- to C-terminus: Small ribosomal subunit protein uS10 (102 aa).

Belongs to the universal ribosomal protein uS10 family. In terms of assembly, part of the 30S ribosomal subunit.

Involved in the binding of tRNA to the ribosomes. The chain is Small ribosomal subunit protein uS10 from Bacillus anthracis (strain A0248).